A 113-amino-acid chain; its full sequence is Biotrophy-associated secreted protein 3 (113 aa).

The signal sequence occupies residues 1–20 (MQFSTVSFAIFAILPAMVAA).

Its subcellular location is the secreted. Its function is as follows. Secreted effector involved in biotrophic colonization of plant cells. This is Biotrophy-associated secreted protein 3 from Pyricularia oryzae (strain 70-15 / ATCC MYA-4617 / FGSC 8958) (Rice blast fungus).